The primary structure comprises 106 residues: Small ribosomal subunit protein uS10 (106 aa).

The protein belongs to the universal ribosomal protein uS10 family. In terms of assembly, part of the 30S ribosomal subunit.

In terms of biological role, involved in the binding of tRNA to the ribosomes. The protein is Small ribosomal subunit protein uS10 of Mesomycoplasma hyopneumoniae (strain 232) (Mycoplasma hyopneumoniae).